Consider the following 3431-residue polypeptide: KICSTOR complex protein SZT2 (3431 aa).

Disordered stretches follow at residues 699–731 (SKEP…PQQA), 1067–1101 (LRDP…TLPS), and 1162–1231 (KPKL…GADG). Positions 1082–1188 (VAKDRAGNST…ATGTKATESQ (107 aa)) are mediates interaction with the GATOR1 complex. Polar residues-rich tracts occupy residues 1088 to 1101 (GNST…TLPS) and 1182 to 1212 (TKAT…TPSC). S1275 bears the Phosphoserine mark. The segment at 1356 to 1378 (PPSPGPLSPGPFSSSIEEGPEPR) is disordered. A Phosphoserine modification is found at S1415. Disordered regions lie at residues 1512–1534 (YRES…SDAD), 1629–1678 (PPAS…HPGL), 1806–1883 (RAED…PGET), 2113–2148 (PPSL…SDAV), 2450–2512 (TEAG…LEEG), 2735–2756 (ASPP…GGPL), and 2866–2899 (ETCA…DVPP). Position 1640 is a phosphothreonine (T1640). Residues 1641–1657 (SESSASFPRSPGQPSSL) are compositionally biased toward polar residues. A Phosphoserine modification is found at S1650. Positions 1832 to 1854 (PLISLPSLSQGGSQPGPSRGLSL) are enriched in low complexity. Positions 2118-2129 (LSRSQEPISSED) are enriched in polar residues. The segment covering 2460–2473 (TTDDIVLDRPEDTR) has biased composition (basic and acidic residues). The span at 2739–2749 (LSREQGRLSGS) shows a compositional bias: low complexity.

Part of the KICSTOR complex composed of KPTN, ITFG2, KICS2 and SZT2. SZT2 probably serves as a link between the other three proteins in the KICSTOR complex and may mediate the direct interaction with the GATOR complex via GATOR1. The KICSTOR complex interacts directly with the GATOR1 complex and most probably indirectly with the GATOR2 complex in an amino acid-independent manner. As to expression, mostly expressed in brain, spinal cord and lung.

It is found in the lysosome membrane. The protein resides in the peroxisome. In terms of biological role, as part of the KICSTOR complex functions in the amino acid-sensing branch of the TORC1 signaling pathway. Recruits, in an amino acid-independent manner, the GATOR1 complex to the lysosomal membranes and allows its interaction with GATOR2 and the RAG GTPases. Functions upstream of the RAG GTPases and is required to negatively regulate mTORC1 signaling in absence of amino acids. In absence of the KICSTOR complex mTORC1 is constitutively localized to the lysosome and activated. The KICSTOR complex is also probably involved in the regulation of mTORC1 by glucose. May play a role in the cellular response to oxidative stress. The protein is KICSTOR complex protein SZT2 of Mus musculus (Mouse).